Reading from the N-terminus, the 307-residue chain is 4-diphosphocytidyl-2-C-methyl-D-erythritol kinase (307 aa).

Lysine 9 is an active-site residue. Residue 94 to 104 coordinates ATP; sequence PIGAGLAGGSS. Aspartate 136 is an active-site residue.

This sequence belongs to the GHMP kinase family. IspE subfamily.

It carries out the reaction 4-CDP-2-C-methyl-D-erythritol + ATP = 4-CDP-2-C-methyl-D-erythritol 2-phosphate + ADP + H(+). It participates in isoprenoid biosynthesis; isopentenyl diphosphate biosynthesis via DXP pathway; isopentenyl diphosphate from 1-deoxy-D-xylulose 5-phosphate: step 3/6. Functionally, catalyzes the phosphorylation of the position 2 hydroxy group of 4-diphosphocytidyl-2C-methyl-D-erythritol. The polypeptide is 4-diphosphocytidyl-2-C-methyl-D-erythritol kinase (Synechococcus sp. (strain CC9605)).